The chain runs to 165 residues: Peptidyl-prolyl cis-trans isomerase NIMA-interacting 1 (165 aa).

The WW domain occupies 5 to 39 (EKLPPGWEKRMSRSSGRVYYFNHITNASQWERPSG). The segment at 33 to 56 (QWERPSGGSTVGGSSKNGQGEPAK) is disordered. N6-acetyllysine is present on K48. Positions 54–165 (PAKVRCSHLL…SGIHIILRTE (112 aa)) constitute a PpiC domain. 2 positions are modified to phosphoserine: S73 and S110.

Interacts with STIL. Interacts with KIF20B. Interacts with NEK6. Interacts (via WW domain) with PRKX. Interacts with BTK. Interacts (via PpiC domain) with DAPK1. Interacts with the phosphorylated form of RAF1. Interacts (via WW domain) with ATCAY; upon NGF stimulation. Interacts with PML. Interacts with BCL6. Interacts with FBXW7, disrupting FBXW7 dimerization and promoting FBXW7 autoubiquitination and degradation. Directly interacts with RBBP8/CtIP; this interaction depends upon RBBP8 phosphorylation. Interacts (via WW domain) with IRAK3/IRAK-M (when phosphorylated at 'Ser-110') in response to IL33-mediated (but not TLR4 ligand LPS) dendritic cell stimulation. Interacts with PGK1 (when phosphorylated at 'Ser-203'); the interaction is direct, occurs under hypoxic conditions, and targets PGK1 to the mitochondrion by promoting interactions with the TOM complex. In terms of processing, phosphorylation at Ser-73 by DAPK1 results in inhibition of its catalytic activity, nuclear localization, and its ability to induce centrosome amplification, chromosome instability and cell transformation. Ser-73 is dephosphorylated upon IL33-stimulation of dendritic cells. Expressed in dendritic cells (at protein level).

The protein localises to the nucleus. It is found in the nucleus speckle. It localises to the cytoplasm. The catalysed reaction is [protein]-peptidylproline (omega=180) = [protein]-peptidylproline (omega=0). Functionally, peptidyl-prolyl cis/trans isomerase (PPIase) that binds to and isomerizes specific phosphorylated Ser/Thr-Pro (pSer/Thr-Pro) motifs. By inducing conformational changes in a subset of phosphorylated proteins, acts as a molecular switch in multiple cellular processes. Displays a preference for an acidic residue N-terminal to the isomerized proline bond. Regulates mitosis presumably by interacting with NIMA and attenuating its mitosis-promoting activity. Down-regulates kinase activity of BTK. Can transactivate multiple oncogenes and induce centrosome amplification, chromosome instability and cell transformation. Required for the efficient dephosphorylation and recycling of RAF1 after mitogen activation. Binds and targets PML and BCL6 for degradation in a phosphorylation-dependent manner. Acts as a regulator of JNK cascade by binding to phosphorylated FBXW7, disrupting FBXW7 dimerization and promoting FBXW7 autoubiquitination and degradation: degradation of FBXW7 leads to subsequent stabilization of JUN. May facilitate the ubiquitination and proteasomal degradation of RBBP8/CtIP through CUL3/KLHL15 E3 ubiquitin-protein ligase complex, hence favors DNA double-strand repair through error-prone non-homologous end joining (NHEJ) over error-free, RBBP8-mediated homologous recombination (HR). Upon IL33-induced lung inflammation, catalyzes cis-trans isomerization of phosphorylated IRAK3/IRAK-M, inducing IRAK3 stabilization, nuclear translocation and expression of pro-inflammatory genes in dendritic cells. Catalyzes cis-trans isomerization of phosphorylated phosphoglycerate kinase PGK1 under hypoxic conditions to promote its binding to the TOM complex and targeting to the mitochondrion. This is Peptidyl-prolyl cis-trans isomerase NIMA-interacting 1 (Pin1) from Mus musculus (Mouse).